Reading from the N-terminus, the 201-residue chain is Testis-expressed protein 38 (201 aa).

A helical membrane pass occupies residues 3–23; sequence ISLCIGFLGLCSVLIGSCILF.

Its subcellular location is the membrane. This is Testis-expressed protein 38 (Tex38) from Mus musculus (Mouse).